The following is a 459-amino-acid chain: Magnesium transporter MRS2-11, chloroplastic (459 aa).

The transit peptide at 1–62 (MALTPIPSTF…EALKVLSRSK (62 aa)) directs the protein to the chloroplast. The disordered stretch occupies residues 76–122 (GDYESLNVSDDDDGSDSNSSDGDNGGGRDDSKKIDSSSSSSSSDSTS). Over residues 101–110 (GGRDDSKKID) the composition is skewed to basic and acidic residues. Residues 111–122 (SSSSSSSSDSTS) show a composition bias toward low complexity. 2 helical membrane passes run 397–417 (LLLQ…GIFG) and 430–450 (AFWL…FLMY). A Required for magnesium transport activity motif is present at residues 417 to 419 (GMN).

This sequence belongs to the CorA metal ion transporter (MIT) (TC 1.A.35.5) family. Expressed in the green part of the plant. Preferentially expressed in the spongy mesophyll cells and stomata of young leaves but also detected in cotyledons and at the base of the leaf petioles.

It localises to the plastid. The protein resides in the chloroplast membrane. In terms of biological role, high-affinity magnesium transporter that mediates the influx of magnesium in chloroplast. In Arabidopsis thaliana (Mouse-ear cress), this protein is Magnesium transporter MRS2-11, chloroplastic (MRS2-11).